A 183-amino-acid chain; its full sequence is MAILRLENGTTYTQLADISLELAKLNVTLNYWPIENEATRQLLKEASLTDEEKEIVLTSLDGYFEQLKQEAGYQARDLIVLHPDIANLDTLLAKFERCHTHADDEVRYIIDGEGVFGFVFPDGSQGELTIQPQEYINVPAHSEHWFHLTASKRVKAVRYFTTTAGWVPEYTETVIRFPSLTAV.

Positions 99, 101, 105, and 144 each coordinate Fe(2+). Positions 99, 101, 105, and 144 each coordinate Ni(2+).

Belongs to the acireductone dioxygenase (ARD) family. Monomer. Fe(2+) is required as a cofactor. It depends on Ni(2+) as a cofactor.

It catalyses the reaction 1,2-dihydroxy-5-(methylsulfanyl)pent-1-en-3-one + O2 = 3-(methylsulfanyl)propanoate + CO + formate + 2 H(+). The catalysed reaction is 1,2-dihydroxy-5-(methylsulfanyl)pent-1-en-3-one + O2 = 4-methylsulfanyl-2-oxobutanoate + formate + 2 H(+). It functions in the pathway amino-acid biosynthesis; L-methionine biosynthesis via salvage pathway; L-methionine from S-methyl-5-thio-alpha-D-ribose 1-phosphate: step 5/6. In terms of biological role, catalyzes 2 different reactions between oxygen and the acireductone 1,2-dihydroxy-3-keto-5-methylthiopentene (DHK-MTPene) depending upon the metal bound in the active site. Fe-containing acireductone dioxygenase (Fe-ARD) produces formate and 2-keto-4-methylthiobutyrate (KMTB), the alpha-ketoacid precursor of methionine in the methionine recycle pathway. Ni-containing acireductone dioxygenase (Ni-ARD) produces methylthiopropionate, carbon monoxide and formate, and does not lie on the methionine recycle pathway. In Microcystis aeruginosa, this protein is Acireductone dioxygenase.